The following is a 261-amino-acid chain: ATP synthase subunit a (261 aa).

A run of 7 helical transmembrane segments spans residues Ile31–Met51, Trp64–Gly84, Leu97–Val117, Leu126–Trp146, Ile166–Leu188, Val201–Pro223, and Glu235–Asn255.

This sequence belongs to the ATPase A chain family. As to quaternary structure, F-type ATPases have 2 components, CF(1) - the catalytic core - and CF(0) - the membrane proton channel. CF(1) has five subunits: alpha(3), beta(3), gamma(1), delta(1), epsilon(1). CF(0) has three main subunits: a(1), b(2) and c(9-12). The alpha and beta chains form an alternating ring which encloses part of the gamma chain. CF(1) is attached to CF(0) by a central stalk formed by the gamma and epsilon chains, while a peripheral stalk is formed by the delta and b chains.

It localises to the cell inner membrane. Its function is as follows. Key component of the proton channel; it plays a direct role in the translocation of protons across the membrane. The chain is ATP synthase subunit a from Rhizorhabdus wittichii (strain DSM 6014 / CCUG 31198 / JCM 15750 / NBRC 105917 / EY 4224 / RW1) (Sphingomonas wittichii).